The following is a 205-amino-acid chain: Probable GTP-binding protein EngB (205 aa).

The EngB-type G domain occupies 22-195 (NLPEVALVGR…LDLLDYFWNG (174 aa)). Residues 30-37 (GRSNVGKS), 57-61 (GKTQT), 75-78 (DLPG), 142-145 (TKAD), and 174-176 (FSA) contribute to the GTP site. Residues serine 37 and threonine 59 each coordinate Mg(2+).

The protein belongs to the TRAFAC class TrmE-Era-EngA-EngB-Septin-like GTPase superfamily. EngB GTPase family. The cofactor is Mg(2+).

Functionally, necessary for normal cell division and for the maintenance of normal septation. This chain is Probable GTP-binding protein EngB, found in Heliobacterium modesticaldum (strain ATCC 51547 / Ice1).